Consider the following 617-residue polypeptide: Probable potassium transport system protein Kup 3 (617 aa).

Helical transmembrane passes span 42 to 62 (VASLILWALLLIISLKYALLI), 95 to 115 (LVVGLVGAALLYGDGAITPAI), 129 to 149 (PSLAPAVVPVTVVILVGLFMM), 160 to 180 (IFGPVMLAWFAVLAALGIHGI), 206 to 226 (VSFAILGAAFLAVTGGEAMYA), 240 to 260 (WFAICLPALVLNYFGQAALLI), 282 to 302 (LVAFSAVATVIASQAIISGVF), 330 to 350 (IYVPLVNWLLAAATLGAVLSF), 360 to 380 (YGIAVSLLMAITTLLAALVAI), 386 to 406 (PWLVVAVNGAFFVIDVIFFSA), and 411 to 431 (LFEGGWFPLLLAALVAFMMLT).

The protein belongs to the HAK/KUP transporter (TC 2.A.72) family.

Its subcellular location is the cell inner membrane. The enzyme catalyses K(+)(in) + H(+)(in) = K(+)(out) + H(+)(out). Its function is as follows. Transport of potassium into the cell. Likely operates as a K(+):H(+) symporter. The polypeptide is Probable potassium transport system protein Kup 3 (Bradyrhizobium diazoefficiens (strain JCM 10833 / BCRC 13528 / IAM 13628 / NBRC 14792 / USDA 110)).